A 533-amino-acid polypeptide reads, in one-letter code: T-complex protein 1 subunit delta (533 aa).

The segment at 1 to 24 is disordered; that stretch reads MVVKPAARGMKPQGQAYKDKSKPA.

This sequence belongs to the TCP-1 chaperonin family. Heterooligomeric complex of about 850 to 900 kDa that forms two stacked rings, 12 to 16 nm in diameter.

It localises to the cytoplasm. Molecular chaperone; assists the folding of proteins upon ATP hydrolysis. Known to play a role, in vitro, in the folding of actin and tubulin. This is T-complex protein 1 subunit delta from Ochlerotatus triseriatus (Eastern treehole mosquito).